The sequence spans 164 residues: Kunitz-type proteinase inhibitor BbCI (164 aa).

The protein belongs to the protease inhibitor I3 (leguminous Kunitz-type inhibitor) family.

Its subcellular location is the secreted. In terms of biological role, inhibits T.cruzi cruzipain. The sequence is that of Kunitz-type proteinase inhibitor BbCI from Bauhinia bauhinioides (Perlebia bauhinoides).